A 1231-amino-acid chain; its full sequence is uncharacterized protein (1231 aa).

Disordered stretches follow at residues 171–197 (LKPDESIKSSMKKNVDGTGDSNKQHDD), 210–259 (DESF…HLPT), and 389–547 (ASPR…RSSR). Residues 440 to 450 (RSRHSHKRRSI) are compositionally biased toward basic residues. Phosphoserine occurs at positions 449, 451, 453, and 455. Over residues 458–502 (RGGRRAVRRSRSRSPRRSYNRGSTRSRSRSMRHRSRSPAHYRGRG) the composition is skewed to basic residues. A compositionally biased stretch (basic and acidic residues) spans 503 to 541 (RGREPASKERGSSSRDFGGRHSLQRERERSSEYYHRNEG). Position 549 is a phosphotyrosine (tyrosine 549). Disordered stretches follow at residues 570–591 (KTSSISPTASSNKEKEKEASEP), 950–981 (PNLDRDMSSMPINKQRRGRNTPSIMLDDDDEE), and 1058–1203 (TLSK…PPFN). A phosphoserine mark is found at serine 573 and serine 589. Threonine 970 carries the post-translational modification Phosphothreonine. Position 972 is a phosphoserine (serine 972). Over residues 1076–1103 (YMMNQQHGAPNAQNAPNLGQNPGQNLGQ) the composition is skewed to polar residues. Low complexity predominate over residues 1118–1127 (QQQQQQQQQQ). Positions 1178-1203 (PPGPGGYVGPPPNPWASNVPPQPPFN) are enriched in pro residues.

This is an uncharacterized protein from Drosophila melanogaster (Fruit fly).